Reading from the N-terminus, the 447-residue chain is GTPase Era, mitochondrial (447 aa).

Residues 1-18 (MTLRSCETFLRRSLRFST) constitute a mitochondrion transit peptide. The Era-type G domain maps to 109-340 (KSLKVAIVGS…RYLFVAAKPC (232 aa)). Residues 117–124 (GSPNAGKS) are G1. 117-124 (GSPNAGKS) serves as a coordination point for GTP. The segment at 143–147 (HTTRS) is G2. Positions 164 to 167 (DTPG) are G3. Residues 164-168 (DTPGL) and 233-236 (NKVD) each bind GTP. Residues 233–236 (NKVD) are G4. Residues 318–320 (LSS) form a G5 region. The KH type-2 domain occupies 370–447 (LPKEVPYTMT…RLKISVKLRK (78 aa)).

Belongs to the TRAFAC class TrmE-Era-EngA-EngB-Septin-like GTPase superfamily. Era GTPase family.

It localises to the mitochondrion matrix. The protein resides in the mitochondrion inner membrane. Functionally, probable GTPase that plays a role in the mitochondrial ribosomal small subunit assembly. Specifically binds the 12S mitochondrial rRNA (12S mt-rRNA) to a 33 nucleotide section delineating the 3' terminal stem-loop region. May act as a chaperone that protects the 12S mt-rRNA on the 28S mitoribosomal subunit during ribosomal small subunit assembly. This Danio rerio (Zebrafish) protein is GTPase Era, mitochondrial (eral1).